The primary structure comprises 454 residues: Venom prothrombin activator porpharin-D (454 aa).

Positions 1-20 (MAPQLLLCLILTFLWSLPEA) are cleaved as a signal peptide. Positions 21-40 (ESNVFLKSKEANRFLQRTKR) are excised as a propeptide. In terms of domain architecture, Gla spans 41–86 (SNSLFEEFRPGNIERECIEEKCSKEEAREIFKDNEKTEAFWNVYVD). 10 positions are modified to 4-carboxyglutamate: Glu-46, Glu-47, Glu-54, Glu-56, Glu-59, Glu-60, Glu-65, Glu-66, Glu-69, and Glu-75. Cys-57 and Cys-62 are disulfide-bonded. An EGF-like 1; calcium-binding domain is found at 86–122 (DGDQCSSNPCHYGGTCKDGIGSYTCTCLPNYEGKNCE). Cystine bridges form between Cys-90-Cys-101, Cys-95-Cys-110, Cys-112-Cys-121, Cys-129-Cys-140, Cys-136-Cys-149, Cys-151-Cys-164, Cys-172-Cys-316, Cys-216-Cys-221, Cys-236-Cys-252, Cys-364-Cys-378, and Cys-389-Cys-417. Ser-92 carries O-linked (Hex...) serine glycosylation. An EGF-like 2 domain is found at 129–164 (CRFFNGNCWHFCKPVQNDTQCSCAESYRLGDDGHSC). Positions 182-209 (REASLPDFVQSQNATLLKKSDNPSPDIR) are cleaved as a propeptide — activation peptide. The region spanning 210–441 (IINGMDCKLG…FIPWIKAVMR (232 aa)) is the Peptidase S1 domain. Active-site charge relay system residues include His-251 and Asp-296. Ser-393 serves as the catalytic Charge relay system.

This sequence belongs to the peptidase S1 family. Snake venom subfamily. As to quaternary structure, heterodimer of a light chain and a heavy chain; disulfide-linked. In terms of processing, the vitamin K-dependent, enzymatic carboxylation of some glutamate residues allows the modified protein to bind calcium. Expressed by the venom gland.

It localises to the secreted. The catalysed reaction is Selective cleavage of Arg-|-Thr and then Arg-|-Ile bonds in prothrombin to form thrombin.. Snake prothrombin activator that attacks the hemostatic system of prey. This protein is functionally similar to blood coagulation factor Xa. The sequence is that of Venom prothrombin activator porpharin-D from Pseudechis porphyriacus (Red-bellied black snake).